Consider the following 497-residue polypeptide: ATP synthase subunit alpha, chloroplastic (497 aa).

170–177 (GDRQTGKT) is an ATP binding site.

It belongs to the ATPase alpha/beta chains family. F-type ATPases have 2 components, CF(1) - the catalytic core - and CF(0) - the membrane proton channel. CF(1) has five subunits: alpha(3), beta(3), gamma(1), delta(1), epsilon(1). CF(0) has four main subunits: a, b, b' and c.

The protein resides in the plastid. Its subcellular location is the chloroplast thylakoid membrane. It carries out the reaction ATP + H2O + 4 H(+)(in) = ADP + phosphate + 5 H(+)(out). Produces ATP from ADP in the presence of a proton gradient across the membrane. The alpha chain is a regulatory subunit. The sequence is that of ATP synthase subunit alpha, chloroplastic from Bigelowiella natans (Pedinomonas minutissima).